The primary structure comprises 407 residues: Arginine biosynthesis bifunctional protein ArgJ (407 aa).

Positions 169, 192, 203, 283, 402, and 407 each coordinate substrate. The active-site Nucleophile is the threonine 203.

This sequence belongs to the ArgJ family. As to quaternary structure, heterotetramer of two alpha and two beta chains.

It localises to the cytoplasm. It carries out the reaction N(2)-acetyl-L-ornithine + L-glutamate = N-acetyl-L-glutamate + L-ornithine. The enzyme catalyses L-glutamate + acetyl-CoA = N-acetyl-L-glutamate + CoA + H(+). It functions in the pathway amino-acid biosynthesis; L-arginine biosynthesis; L-ornithine and N-acetyl-L-glutamate from L-glutamate and N(2)-acetyl-L-ornithine (cyclic): step 1/1. It participates in amino-acid biosynthesis; L-arginine biosynthesis; N(2)-acetyl-L-ornithine from L-glutamate: step 1/4. Catalyzes two activities which are involved in the cyclic version of arginine biosynthesis: the synthesis of N-acetylglutamate from glutamate and acetyl-CoA as the acetyl donor, and of ornithine by transacetylation between N(2)-acetylornithine and glutamate. The chain is Arginine biosynthesis bifunctional protein ArgJ from Mycobacterium leprae (strain TN).